The following is a 401-amino-acid chain: LysM domain-containing GPI-anchored protein LYP4 (401 aa).

Residues 1–23 (MPPPLLLLLLLAAAAAAVAPARS) form the signal peptide. Disulfide bonds link cysteine 30/cysteine 96, cysteine 36/cysteine 162, cysteine 94/cysteine 160, and cysteine 96/cysteine 162. LysM domains lie at 106 to 156 (VRYV…TLFV) and 175 to 218 (LTYV…IIVV). Cystine bridges form between cysteine 223/cysteine 255 and cysteine 250/cysteine 279. Asparagine 240 is a glycosylation site (N-linked (GlcNAc...) asparagine). Asparagine 281, asparagine 288, and asparagine 310 each carry an N-linked (GlcNAc...) asparagine glycan. Serine 373 carries the GPI-anchor amidated serine lipid modification. Positions 374-401 (SGPPPAGRHVVGDVLGAFALCLVGNLLW) are cleaved as a propeptide — removed in mature form.

In terms of assembly, interacts with LYP6. Interacts with CEBIP. Interacts with CERK1. In terms of tissue distribution, expressed in roots and leaves.

It localises to the cell membrane. Functions in innate immunity. Functions as a pattern recognition receptor (PRR), sensing bacterial peptidoglycan (PGN) and fungal chitin at the cell surface. Involved in resistance against the bacterial pathogen Xanthomonas oryzae pv. oryzae (Xoo) and the fungal pathogen Magnaporthe oryzae. Binds PGN and fungal chitin in vitro. Involved in microbe-associated molecular patterns (MAMPs) perception and participates in the activation of defense genes against the bacterial pathogen Xanthomonas oryzae pv. oryzicola (Xoc) or the fungal pathogen Magnaporthe oryzae. This chain is LysM domain-containing GPI-anchored protein LYP4, found in Oryza sativa subsp. japonica (Rice).